Here is a 151-residue protein sequence, read N- to C-terminus: Transcriptional repressor NrdR (151 aa).

A zinc finger lies at 3 to 34 (CPFCGYSESKVVDSRSTEDNMAIRRRRECLEC). The ATP-cone domain occupies 49-139 (ILVIKKDSSR…VYRQFKDINT (91 aa)).

The protein belongs to the NrdR family. Requires Zn(2+) as cofactor.

Its function is as follows. Negatively regulates transcription of bacterial ribonucleotide reductase nrd genes and operons by binding to NrdR-boxes. The protein is Transcriptional repressor NrdR of Clostridium acetobutylicum (strain ATCC 824 / DSM 792 / JCM 1419 / IAM 19013 / LMG 5710 / NBRC 13948 / NRRL B-527 / VKM B-1787 / 2291 / W).